The sequence spans 283 residues: Gap junction beta-1 protein (283 aa).

The Cytoplasmic portion of the chain corresponds to M1–R22. A helical membrane pass occupies residues V23–G45. Residues D46–R75 are Extracellular-facing. Residues L76–V95 form a helical membrane-spanning segment. Residues A96–T130 are Cytoplasmic-facing. A helical membrane pass occupies residues L131–F153. Residues Y154 to T191 are Extracellular-facing. The chain crosses the membrane as a helical span at residues V192–V214. Residues R215 to C283 lie on the Cytoplasmic side of the membrane. Phosphoserine occurs at positions 233, 258, 266, and 277.

It belongs to the connexin family. Beta-type (group I) subfamily. A connexon is composed of a hexamer of connexins. Interacts with CNST.

It localises to the cell membrane. Its subcellular location is the cell junction. The protein resides in the gap junction. Functionally, one gap junction consists of a cluster of closely packed pairs of transmembrane channels, the connexons, through which materials of low MW diffuse from one cell to a neighboring cell. The polypeptide is Gap junction beta-1 protein (GJB1) (Equus caballus (Horse)).